The primary structure comprises 113 residues: Large ribosomal subunit protein bL19 (113 aa).

It belongs to the bacterial ribosomal protein bL19 family.

Its function is as follows. This protein is located at the 30S-50S ribosomal subunit interface and may play a role in the structure and function of the aminoacyl-tRNA binding site. The chain is Large ribosomal subunit protein bL19 from Desulfitobacterium hafniense (strain DSM 10664 / DCB-2).